The following is a 185-amino-acid chain: Peptidyl-tRNA hydrolase (185 aa).

Y14 is a binding site for tRNA. H19 functions as the Proton acceptor in the catalytic mechanism. TRNA is bound by residues F64, N66, and N112.

The protein belongs to the PTH family. As to quaternary structure, monomer.

The protein resides in the cytoplasm. The enzyme catalyses an N-acyl-L-alpha-aminoacyl-tRNA + H2O = an N-acyl-L-amino acid + a tRNA + H(+). In terms of biological role, hydrolyzes ribosome-free peptidyl-tRNAs (with 1 or more amino acids incorporated), which drop off the ribosome during protein synthesis, or as a result of ribosome stalling. Catalyzes the release of premature peptidyl moieties from peptidyl-tRNA molecules trapped in stalled 50S ribosomal subunits, and thus maintains levels of free tRNAs and 50S ribosomes. The protein is Peptidyl-tRNA hydrolase of Alkaliphilus oremlandii (strain OhILAs) (Clostridium oremlandii (strain OhILAs)).